The following is a 192-amino-acid chain: Leucine-rich repeat-containing protein 51 (192 aa).

LRR repeat units lie at residues 49–71, 80–101, and 103–124; these read SLTQ…NQVA, NLAW…LTTF, and NLSV…NKLA. One can recognise an LRRCT domain in the interval 137-175; sequence NPMEEEKGYRQYVLCTLSRITTFDFSGVTKADRTTAEVW.

The protein localises to the cytoplasm. In Homo sapiens (Human), this protein is Leucine-rich repeat-containing protein 51.